A 112-amino-acid chain; its full sequence is Colipase (112 aa).

The signal sequence occupies residues methionine 1–alanine 17. Residues alanine 18–arginine 22 constitute a propeptide, enterostatin, activation peptide. 5 cysteine pairs are disulfide-bonded: cysteine 34–cysteine 45, cysteine 40–cysteine 56, cysteine 44–cysteine 78, cysteine 66–cysteine 86, and cysteine 80–cysteine 104.

Belongs to the colipase family. As to quaternary structure, forms a 1:1 stoichiometric complex with pancreatic lipase. As to expression, expressed by the pancreas.

The protein localises to the secreted. In terms of biological role, colipase is a cofactor of pancreatic lipase. It allows the lipase to anchor itself to the lipid-water interface. Without colipase the enzyme is washed off by bile salts, which have an inhibitory effect on the lipase. Functionally, enterostatin has a biological activity as a satiety signal. The protein is Colipase of Rattus norvegicus (Rat).